The primary structure comprises 371 residues: Photosynthetic reaction center cytochrome c subunit (371 aa).

Met114, Cys127, Cys130, His131, Met153, His167, Cys178, Cys181, His182, Met267, Cys278, Cys281, His282, Cys339, Cys342, and His343 together coordinate heme.

Component of the photosynthetic reaction center composed of protein subunits L (PufL), M (PufM), H (PuhA) and cytochrome C (PufC). The reaction center interacts with light-harvesting antenna complex LH1. In terms of processing, binds 4 heme groups per subunit.

The protein resides in the cellular chromatophore membrane. Functionally, the reaction center of purple bacteria contains a tightly bound cytochrome molecule which re-reduces the photo oxidized primary electron donor. The protein is Photosynthetic reaction center cytochrome c subunit (pufC) of Roseobacter denitrificans (strain ATCC 33942 / OCh 114) (Erythrobacter sp. (strain OCh 114)).